We begin with the raw amino-acid sequence, 639 residues long: Homeobox protein 9 (639 aa).

Disordered stretches follow at residues 1 to 45 (MLNS…DKQN), 66 to 144 (SPNH…DDNS), 157 to 179 (NQNQNQNQNQNQNQNQNQNQNQN), 262 to 313 (PRTL…SSGT), 331 to 422 (SESS…QTSN), and 436 to 547 (TNKN…NNEN). Residues 72–109 (ANNNNNNNNNNNNNNNNNNNNNNNNNNNNNNNNNNNIQ) are a coiled coil. Composition is skewed to low complexity over residues 73–119 (NNNN…SNNN) and 126–142 (GSLNSSNDNNFNSGNDD). Coiled coils occupy residues 152 to 184 (SNQNQNQNQNQNQNQNQNQNQNQNQNQNQKDSW) and 230 to 296 (EIEI…NINE). Residues 266–300 (NNSSDSISENINNNNNNNNNNNNNNNNNINESNIN) show a composition bias toward low complexity. A compositionally biased stretch (basic and acidic residues) spans 345 to 354 (QPRKVPRDLN). Over residues 358–399 (NNNINYANNNNNNNNNNNNNNHNNNINNNNNNNNNNNNNSNN) the composition is skewed to low complexity. Residues 365–396 (NNNNNNNNNNNNNNHNNNINNNNNNNNNNNNN) are a coiled coil. The segment covering 405-422 (GSITNSVNIKPSKDQTSN) has biased composition (polar residues). Residues 436-526 (TNKNNNNNNN…NNNLTSSSNN (91 aa)) are compositionally biased toward low complexity. Positions 532-547 (GNTSPNQSSANGNNEN) are enriched in polar residues. Residues 559–621 (KRKKRGKLPG…NARRRILPRQ (63 aa)) constitute a DNA-binding region (homeobox).

It localises to the nucleus. Putative transcription factor. This is Homeobox protein 9 (hbx9) from Dictyostelium discoideum (Social amoeba).